The primary structure comprises 203 residues: Cilia- and flagella-associated protein 20 (203 aa).

Belongs to the CFAP20 family.

It is found in the nucleus. Its subcellular location is the cytoplasm. The protein resides in the cytoskeleton. It localises to the microtubule organizing center. The protein localises to the centrosome. It is found in the centriole. Its subcellular location is the cilium basal body. The protein resides in the cilium axoneme. Cilium- and flagellum-specific protein that plays a role in axonemal structure organization and motility. Microtubule inner protein (MIP) part of the dynein-decorated doublet microtubules (DMTs) in cilia axoneme, which is required for motile cilia beating. Involved in the regulation of the size and morphology of cilia. Required for axonemal microtubules polyglutamylation. The sequence is that of Cilia- and flagella-associated protein 20 from Caenorhabditis briggsae.